Consider the following 122-residue polypeptide: Large ribosomal subunit protein uL14 (122 aa).

Belongs to the universal ribosomal protein uL14 family. Part of the 50S ribosomal subunit. Forms a cluster with proteins L3 and L19. In the 70S ribosome, L14 and L19 interact and together make contacts with the 16S rRNA in bridges B5 and B8.

Binds to 23S rRNA. Forms part of two intersubunit bridges in the 70S ribosome. This is Large ribosomal subunit protein uL14 from Ectopseudomonas mendocina (strain ymp) (Pseudomonas mendocina).